Reading from the N-terminus, the 513-residue chain is MYRKLAVISAFLATARAQSACTLQSETHPPLTWQKCSSGGTCTQQTGSVVIDANWRWTHATNSSTNCYDGNTWSSTLCPDNETCAKNCCLDGAAYASTYGVTTSGNSLSIGFVTQSAQKNVGARLYLMASDTTYQEFTLLGNEFSFDVDVSQLPCGLNGALYFVSMDADGGVSKYPTNTAGAKYGTGYCDSQCPRDLKFINGQANVEGWEPSSNNANTGIGGHGSCCSEMDIWEANSISEALTPHPCTTVGQEICEGDGCGGTYSDNRYGGTCDPDGCDWNPYRLGNTSFYGPGSSFTLDTTKKLTVVTQFETSGAINRYYVQNGVTFQQPNAELGSYSGNELNDDYCTAEEAEFGGSSFSDKGGLTQFKKATSGGMVLVMSLWDDYYANMLWLDSTYPTNETSSTPGAVRGSCSTSSGVPAQVESQSPNAKVTFSNIKFGPIGSTGNPSGGNPPGGNRGTTTTRRPATTTGSSPGPTQSHYGQCGGIGYSGPTVCASGTTCQVLNPYYSQCL.

The signal sequence occupies residues 1 to 17 (MYRKLAVISAFLATARA). Gln18 is modified (pyrrolidone carboxylic acid). A catalytic region spans residues 18 to 453 (QSACTLQSET…GSTGNPSGGN (436 aa)). Cystine bridges form between Cys21–Cys89, Cys36–Cys42, Cys67–Cys88, Cys78–Cys84, Cys155–Cys414, Cys189–Cys227, Cys193–Cys226, Cys247–Cys273, Cys255–Cys260, and Cys278–Cys348. N-linked (GlcNAc) asparagine glycosylation is present at Asn62. The active-site Nucleophile is the Glu229. Glu234 serves as the catalytic Proton donor/acceptor. Asn287 and Asn401 each carry an N-linked (GlcNAc) asparagine glycan. Polar residues predominate over residues 401–437 (NETSSTPGAVRGSCSTSSGVPAQVESQSPNAKVTFSN). The disordered stretch occupies residues 401-480 (NETSSTPGAV…TGSSPGPTQS (80 aa)). Over residues 449-459 (PSGGNPPGGNR) the composition is skewed to gly residues. The segment at 454 to 477 (PPGGNRGTTTTRRPATTTGSSPGP) is linker. Residues 460–478 (GTTTTRRPATTTGSSPGPT) are compositionally biased toward low complexity. Residue Thr461 is glycosylated (O-linked (Man) threonine). 3 O-linked (Man...) threonine glycosylation sites follow: Thr462, Thr463, and Thr464. A glycan (O-linked (Man) threonine) is linked at Thr469. Residues Thr470 and Thr471 are each glycosylated (O-linked (Man...) threonine). Residues Ser473 and Ser474 are each glycosylated (O-linked (Man) serine). The region spanning 477-513 (PTQSHYGQCGGIGYSGPTVCASGTTCQVLNPYYSQCL) is the CBM1 domain. O-linked (Man) threonine glycosylation is present at Thr478. O-linked (Man) serine glycans are attached at residues Ser480 and Ser491. Intrachain disulfides connect Cys485–Cys502 and Cys496–Cys512.

This sequence belongs to the glycosyl hydrolase 7 (cellulase C) family. Post-translationally, N-glycosylated. The catalytic core domain comprises three N-linked glycans which each consist of a single N-acetylglucosamine residue. O-glycosylated. Within the linker domain, all 8 threonines are variably glycosylated with between at least one, and up to three, mannose residues per site. All serines in this domain are at least partially glycosylated with a single mannose residue. O-glycosylation of the cellulase linker provides protection from proteolysis. Linker glycans also contribute to binding affinity of cellobiohydrolases to cellulose.

It localises to the secreted. The catalysed reaction is Hydrolysis of (1-&gt;4)-beta-D-glucosidic linkages in cellulose and cellotetraose, releasing cellobiose from the non-reducing ends of the chains.. Its function is as follows. Exocellobiohydrolases (CBH) that catalyzes the hydrolysis of 1,4-beta-D-glucosidic bonds in cellulose to release the disaccharide cellobiose. The degradation of cellulose involves an interplay between different cellulolytic enzymes. Hydrolysis starts with endoglucanases (EGs), which cut internal beta-1,4-glucosidic bonds in cellulose to reduce the polymerization degree of the substrate and create new chain ends for exocellobiohydrolases (CBHs). The CBHs release the disaccharide cellobiose from the non-reducing end of the cellulose polymer chain. Finally, beta-1,4-glucosidases hydrolyze the cellobiose and other short cello-oligosaccharides into glucose units. The chain is Exoglucanase 1 (cbh1) from Hypocrea jecorina (Trichoderma reesei).